The chain runs to 1248 residues: Period circadian protein homolog 2 (1248 aa).

The disordered stretch occupies residues 1–57 (MNGYVEFSPSPTKESVEPQPSQAVLQEDVDMSSGSSGHENCSMGRDSQGSDCDDNGK). Composition is skewed to polar residues over residues 9–24 (PSPTKESVEPQPSQAV) and 32–50 (SSGSSGHENCSMGRDSQGS). The short motif at 105–114 (LIRTLRELKV) is the Nuclear export signal 1 element. The PAS 1 domain occupies 175–242 (ITSEYIVKNA…FHSYTTPYKL (68 aa)). The LXXLL signature appears at 302–306 (LCCLL). The PAS 2 domain occupies 315–381 (YEAPRIPPEK…MLAIHKKILQ (67 aa)). The region spanning 389 to 432 (YSPIRFRARNGEYITLDTSWSSFINPWSRKISFIIGRHKVRVGP) is the PAC domain. The Nuclear export signal 2 motif lies at 456–465 (LTEQIHRLLM). Disordered stretches follow at residues 467–563 (PVPH…SLPK) and 619–638 (VSPGLHAEEAAPPPSKVSSH). The tract at residues 474–478 (SGYGS) is important for protein stability. Residues 506-706 (RKSGISKNGS…GAPGGLSQEK (201 aa)) are CSNK1E binding domain. The span at 510–521 (ISKNGSKTQTRS) shows a compositional bias: polar residues. A phosphoserine mark is found at S521, S524, S527, and S540. The segment covering 523 to 534 (FSHESGEQKEIA) has biased composition (basic and acidic residues). Phosphoserine occurs at positions 656, 690, 694, 703, and 755. 2 disordered regions span residues 675-708 (DKKPQPELETVEDAVSGPESLDGAPGGLSQEKGP) and 751-829 (RAQA…PSAP). A Nuclear localization signal motif is present at residues 773 to 789 (KKTGKNRKLKSKRVKTR). Over residues 774 to 787 (KTGKNRKLKSKRVK) the composition is skewed to basic residues. The segment covering 816–827 (SPSDTSQSSCPS) has biased composition (low complexity). The interaction with PPARG stretch occupies residues 873 to 1058 (DFAVQPLPLA…DLCSATGSAL (186 aa)). The residue at position 930 (S930) is a Phosphoserine. The tract at residues 950–971 (TPPAATVTSGRASPPLFQSRGS) is disordered. T955 is subject to Phosphothreonine. Residue S962 is modified to Phosphoserine. The short motif at 974-981 (LQLNLLQL) is the Nuclear export signal 3 element. The segment at 984-1035 (APEGSTGAAGTSGTTGTAAAGLDCTPGTSRDRQPKAPSTCKEPSDTQNSDAL) is disordered. A compositionally biased stretch (low complexity) spans 987-1004 (GSTGAAGTSGTTGTAAAG). The LXXLL signature appears at 1042–1046 (LNLLL). Low complexity predominate over residues 1057-1080 (ALSGSGASATSDSLGSGSLGCDAS). The tract at residues 1057 to 1113 (ALSGSGASATSDSLGSGSLGCDASRSGAGSSDTSHTSKYFGSIDSSENNHKAKVSTD) is disordered. The segment covering 1083–1102 (GAGSSDTSHTSKYFGSIDSS) has biased composition (polar residues). The segment covering 1103-1112 (ENNHKAKVST) has biased composition (basic and acidic residues). Residue S1117 is modified to Phosphoserine. The tract at residues 1148–1248 (SRDLESVLRE…LTGPRIEAQT (101 aa)) is CRY binding domain. A disordered region spans residues 1215–1248 (PYEEDSPSPGLCDTSEAKEEEGEQLTGPRIEAQT).

Homodimer. Component of the circadian core oscillator, which includes the CRY proteins, CLOCK or NPAS2, BMAL1 or BMAL2, CSNK1D and/or CSNK1E, TIMELESS, and the PER proteins. Interacts with CLOCK-BMAL1 (off DNA). Interacts with BMAL2. Interacts directly with PER1 and PER3, and through a C-terminal domain, with CRY1 and CRY2. Interacts (via PAS 2 domain) with TIMELESS. Interacts with NFIL3. Different large complexes have been identified with different repressive functions. The core of PER complexes is composed of at least PER1, PER2, PER3, CRY1, CRY2, CSNK1D and/or CSNK1E. The large PER complex involved in the repression of transcriptional termination is composed of at least PER2, CDK9, DDX5, DHX9, NCBP1 and POLR2A (active). The large PER complex involved in the histone deacetylation is composed of at least HDAC1, PER2, SFPQ and SIN3A. The large PER complex involved in the histone methylation is composed of at least PER2, CBX3, TRIM28, SUV39H1 and/or SUV39H2; CBX3 mediates the formation of the complex. Interacts with SETX; the interaction inhibits termination of circadian target genes. Interacts with the nuclear receptors HNF4A, NR1D1, NR4A2, RORA, PPARA, PPARG and THRA; the interaction with at least PPARG is ligand dependent. Interacts with PML. Interacts (phosphorylated) with BTRC and FBXW11; the interactions trigger proteasomal degradation. Interacts with NONO and SFPQ. Interacts with PRKCDBP. Interacts with MAGEL2. Interacts with MAP1LC3B. Interacts with HNF4A. Acetylated. Deacetylated by SIRT1, resulting in decreased protein stability. Deacetylated by SIRT6, preventing its degradation by the proteasome, resulting in increased protein stability. In terms of processing, phosphorylated by CSNK1E and CSNK1D. Phosphorylation results in PER2 protein degradation. May be dephosphorylated by PP1. Post-translationally, ubiquitinated, leading to its proteasomal degradation. Ubiquitination may be inhibited by CRY1. As to expression, expressed in the brain, mainly in the suprachiasmatic nucleus (SCN). Expression also found in the harderian gland, lung, eye, intestine, liver and skeletal muscle.

The protein resides in the nucleus. The protein localises to the cytoplasm. It is found in the perinuclear region. Transcriptional repressor which forms a core component of the circadian clock. The circadian clock, an internal time-keeping system, regulates various physiological processes through the generation of approximately 24 hour circadian rhythms in gene expression, which are translated into rhythms in metabolism and behavior. It is derived from the Latin roots 'circa' (about) and 'diem' (day) and acts as an important regulator of a wide array of physiological functions including metabolism, sleep, body temperature, blood pressure, endocrine, immune, cardiovascular, and renal function. Consists of two major components: the central clock, residing in the suprachiasmatic nucleus (SCN) of the brain, and the peripheral clocks that are present in nearly every tissue and organ system. Both the central and peripheral clocks can be reset by environmental cues, also known as Zeitgebers (German for 'timegivers'). The predominant Zeitgeber for the central clock is light, which is sensed by retina and signals directly to the SCN. The central clock entrains the peripheral clocks through neuronal and hormonal signals, body temperature and feeding-related cues, aligning all clocks with the external light/dark cycle. Circadian rhythms allow an organism to achieve temporal homeostasis with its environment at the molecular level by regulating gene expression to create a peak of protein expression once every 24 hours to control when a particular physiological process is most active with respect to the solar day. Transcription and translation of core clock components (CLOCK, NPAS2, BMAL1, BMAL2, PER1, PER2, PER3, CRY1 and CRY2) plays a critical role in rhythm generation, whereas delays imposed by post-translational modifications (PTMs) are important for determining the period (tau) of the rhythms (tau refers to the period of a rhythm and is the length, in time, of one complete cycle). A diurnal rhythm is synchronized with the day/night cycle, while the ultradian and infradian rhythms have a period shorter and longer than 24 hours, respectively. Disruptions in the circadian rhythms contribute to the pathology of cardiovascular diseases, cancer, metabolic syndrome and aging. A transcription/translation feedback loop (TTFL) forms the core of the molecular circadian clock mechanism. Transcription factors, CLOCK or NPAS2 and BMAL1 or BMAL2, form the positive limb of the feedback loop, act in the form of a heterodimer and activate the transcription of core clock genes and clock-controlled genes (involved in key metabolic processes), harboring E-box elements (5'-CACGTG-3') within their promoters. The core clock genes: PER1/2/3 and CRY1/2 which are transcriptional repressors form the negative limb of the feedback loop and interact with the CLOCK|NPAS2-BMAL1|BMAL2 heterodimer inhibiting its activity and thereby negatively regulating their own expression. This heterodimer also activates nuclear receptors NR1D1/2 and RORA/B/G, which form a second feedback loop and which activate and repress BMAL1 transcription, respectively. PER1 and PER2 proteins transport CRY1 and CRY2 into the nucleus with appropriate circadian timing, but also contribute directly to repression of clock-controlled target genes through interaction with several classes of RNA-binding proteins, helicases and others transcriptional repressors. PER appears to regulate circadian control of transcription by at least three different modes. First, interacts directly with the CLOCK-BMAL1 at the tail end of the nascent transcript peak to recruit complexes containing the SIN3-HDAC that remodel chromatin to repress transcription. Second, brings H3K9 methyltransferases such as SUV39H1 and SUV39H2 to the E-box elements of the circadian target genes, like PER2 itself or PER1. The recruitment of each repressive modifier to the DNA seems to be very precisely temporally orchestrated by the large PER complex, the deacetylases acting before than the methyltransferases. Additionally, large PER complexes are also recruited to the target genes 3' termination site through interactions with RNA-binding proteins and helicases that may play a role in transcription termination to regulate transcription independently of CLOCK-BMAL1 interactions. Recruitment of large PER complexes to the elongating polymerase at PER and CRY termination sites inhibited SETX action, impeding RNA polymerase II release and thereby repressing transcriptional reinitiation. May propagate clock information to metabolic pathways via the interaction with nuclear receptors. Coactivator of PPARA and corepressor of NR1D1, binds rhythmically at the promoter of nuclear receptors target genes like BMAL1 or G6PC1. Directly and specifically represses PPARG proadipogenic activity by blocking PPARG recruitment to target promoters and thereby transcriptional activation. Required for fatty acid and lipid metabolism, is involved as well in the regulation of circulating insulin levels. Plays an important role in the maintenance of cardiovascular functions through the regulation of NO and vasodilatatory prostaglandins production in aortas. Controls circadian glutamate uptake in synaptic vesicles through the regulation of VGLUT1 expression. May also be involved in the regulation of inflammatory processes. Represses the CLOCK-BMAL1 induced transcription of BHLHE40/DEC1 and ATF4. Negatively regulates the formation of the TIMELESS-CRY1 complex by competing with TIMELESS for binding to CRY1. The chain is Period circadian protein homolog 2 (PER2) from Spalax judaei (Judean Mountains blind mole rat).